A 70-amino-acid polypeptide reads, in one-letter code: Small ribosomal subunit protein bS21 (70 aa).

It belongs to the bacterial ribosomal protein bS21 family.

The protein is Small ribosomal subunit protein bS21 of Nautilia profundicola (strain ATCC BAA-1463 / DSM 18972 / AmH).